The chain runs to 863 residues: Leucine--tRNA ligase (863 aa).

The 'HIGH' region signature appears at 42-53 (PYPSGSGLHVGH). Residues 635–639 (KMSKS) carry the 'KMSKS' region motif. Position 638 (Lys-638) interacts with ATP.

Belongs to the class-I aminoacyl-tRNA synthetase family.

Its subcellular location is the cytoplasm. The catalysed reaction is tRNA(Leu) + L-leucine + ATP = L-leucyl-tRNA(Leu) + AMP + diphosphate. The sequence is that of Leucine--tRNA ligase from Salinibacter ruber (strain DSM 13855 / M31).